Here is a 441-residue protein sequence, read N- to C-terminus: Serine hydroxymethyltransferase (441 aa).

(6S)-5,6,7,8-tetrahydrofolate contacts are provided by residues leucine 119 and glycine 123–leucine 125. Residue lysine 228 is modified to N6-(pyridoxal phosphate)lysine. Serine 370–phenylalanine 372 provides a ligand contact to (6S)-5,6,7,8-tetrahydrofolate.

This sequence belongs to the SHMT family. As to quaternary structure, homodimer. Pyridoxal 5'-phosphate serves as cofactor.

It is found in the cytoplasm. The enzyme catalyses (6R)-5,10-methylene-5,6,7,8-tetrahydrofolate + glycine + H2O = (6S)-5,6,7,8-tetrahydrofolate + L-serine. It functions in the pathway one-carbon metabolism; tetrahydrofolate interconversion. Its pathway is amino-acid biosynthesis; glycine biosynthesis; glycine from L-serine: step 1/1. Functionally, catalyzes the reversible interconversion of serine and glycine with tetrahydrofolate (THF) serving as the one-carbon carrier. This reaction serves as the major source of one-carbon groups required for the biosynthesis of purines, thymidylate, methionine, and other important biomolecules. Also exhibits THF-independent aldolase activity toward beta-hydroxyamino acids, producing glycine and aldehydes, via a retro-aldol mechanism. This is Serine hydroxymethyltransferase from Chlorobium phaeovibrioides (strain DSM 265 / 1930) (Prosthecochloris vibrioformis (strain DSM 265)).